Here is an 89-residue protein sequence, read N- to C-terminus: Small ribosomal subunit protein uS14 (89 aa).

Belongs to the universal ribosomal protein uS14 family. As to quaternary structure, part of the 30S ribosomal subunit. Contacts proteins S3 and S10.

In terms of biological role, binds 16S rRNA, required for the assembly of 30S particles and may also be responsible for determining the conformation of the 16S rRNA at the A site. This chain is Small ribosomal subunit protein uS14, found in Porphyromonas gingivalis (strain ATCC 33277 / DSM 20709 / CIP 103683 / JCM 12257 / NCTC 11834 / 2561).